Consider the following 473-residue polypeptide: Aspartyl/glutamyl-tRNA(Asn/Gln) amidotransferase subunit B (473 aa).

It belongs to the GatB/GatE family. GatB subfamily. As to quaternary structure, heterotrimer of A, B and C subunits.

It carries out the reaction L-glutamyl-tRNA(Gln) + L-glutamine + ATP + H2O = L-glutaminyl-tRNA(Gln) + L-glutamate + ADP + phosphate + H(+). The catalysed reaction is L-aspartyl-tRNA(Asn) + L-glutamine + ATP + H2O = L-asparaginyl-tRNA(Asn) + L-glutamate + ADP + phosphate + 2 H(+). In terms of biological role, allows the formation of correctly charged Asn-tRNA(Asn) or Gln-tRNA(Gln) through the transamidation of misacylated Asp-tRNA(Asn) or Glu-tRNA(Gln) in organisms which lack either or both of asparaginyl-tRNA or glutaminyl-tRNA synthetases. The reaction takes place in the presence of glutamine and ATP through an activated phospho-Asp-tRNA(Asn) or phospho-Glu-tRNA(Gln). This chain is Aspartyl/glutamyl-tRNA(Asn/Gln) amidotransferase subunit B, found in Mycoplasmopsis synoviae (strain 53) (Mycoplasma synoviae).